Here is a 205-residue protein sequence, read N- to C-terminus: Outer-membrane lipoprotein LolB (205 aa).

The signal sequence occupies residues 1-17 (MFLRHCITFTLIALLAG). Cysteine 18 is lipidated: N-palmitoyl cysteine. Residue cysteine 18 is the site of S-diacylglycerol cysteine attachment.

It belongs to the LolB family. As to quaternary structure, monomer.

It localises to the cell outer membrane. Its function is as follows. Plays a critical role in the incorporation of lipoproteins in the outer membrane after they are released by the LolA protein. The sequence is that of Outer-membrane lipoprotein LolB from Pseudomonas putida (strain ATCC 47054 / DSM 6125 / CFBP 8728 / NCIMB 11950 / KT2440).